A 375-amino-acid polypeptide reads, in one-letter code: MHNGSPIIRRKSTRIYVGKVPIGDGAPIAVQSMTNTKTTDVDATVAQIKALERVGVDIVRVSIPTMDAAEAFKLIKQQSTVPLVADIHFDYRIALKVAEYGVDCLRINPGNIGNESRIREVVACARDYNIPIRIGINGGSLEKDIQEKYGEPTPEALLESAMRHVDILDRLNFDQFKVSVKASDVFLAVNSYRLLAKQINNPLHLGITEAGGARSGSVKSAIGLGLLLSEGIGDTLRISLAADPVEEVKVGFDILKSLRIRARGINFIACPTCSRQEFDVIGTVNALEQRLEDLITPMDVSIIGCVVNGPGEALVSTIGVTGARNHSGFYEDGVRQKERFDNKAMIDQLEAKIRAKASILDANNRIVINQLDDNK.

4 residues coordinate [4Fe-4S] cluster: cysteine 270, cysteine 273, cysteine 305, and glutamate 312.

It belongs to the IspG family. It depends on [4Fe-4S] cluster as a cofactor.

It carries out the reaction (2E)-4-hydroxy-3-methylbut-2-enyl diphosphate + oxidized [flavodoxin] + H2O + 2 H(+) = 2-C-methyl-D-erythritol 2,4-cyclic diphosphate + reduced [flavodoxin]. Its pathway is isoprenoid biosynthesis; isopentenyl diphosphate biosynthesis via DXP pathway; isopentenyl diphosphate from 1-deoxy-D-xylulose 5-phosphate: step 5/6. Its function is as follows. Converts 2C-methyl-D-erythritol 2,4-cyclodiphosphate (ME-2,4cPP) into 1-hydroxy-2-methyl-2-(E)-butenyl 4-diphosphate. This is 4-hydroxy-3-methylbut-2-en-1-yl diphosphate synthase (flavodoxin) from Yersinia pseudotuberculosis serotype IB (strain PB1/+).